A 235-amino-acid polypeptide reads, in one-letter code: Uracil-DNA glycosylase (235 aa).

Asp-71 functions as the Proton acceptor in the catalytic mechanism.

Belongs to the uracil-DNA glycosylase (UDG) superfamily. UNG family.

Its subcellular location is the cytoplasm. The enzyme catalyses Hydrolyzes single-stranded DNA or mismatched double-stranded DNA and polynucleotides, releasing free uracil.. Its function is as follows. Excises uracil residues from the DNA which can arise as a result of misincorporation of dUMP residues by DNA polymerase or due to deamination of cytosine. The polypeptide is Uracil-DNA glycosylase (Helicobacter hepaticus (strain ATCC 51449 / 3B1)).